Here is a 393-residue protein sequence, read N- to C-terminus: Cytochrome b (393 aa).

4 helical membrane passes run 33–53, 77–98, 113–133, and 178–198; these read FGSLLGLCLMIQILTGFFLAM, WFLRNTHANGASILFICMYLHM, WNIGVIMFFLMMTTAFVGYVL, and FFAIHFTLPFITVGLTMLHLL. H83 and H97 together coordinate heme b. 2 residues coordinate heme b: H182 and H196. Residue H201 participates in a ubiquinone binding. 4 helical membrane passes run 226 to 246, 288 to 308, 320 to 340, and 347 to 367; these read YKDVLGFLLLLAALTALALFA, LGGVAALALSILALMVLPFIH, LSQLVFWLFVANIAILTWIGG, and FIIIGRIASVSYFTLILILMP.

Belongs to the cytochrome b family. In terms of assembly, the cytochrome bc1 complex contains 3 respiratory subunits (MT-CYB, CYC1 and UQCRFS1), 2 core proteins (UQCRC1 and UQCRC2) and probably 6 low-molecular weight proteins. Heme b is required as a cofactor.

It is found in the mitochondrion inner membrane. Functionally, component of the ubiquinol-cytochrome c reductase complex (complex III or cytochrome b-c1 complex) that is part of the mitochondrial respiratory chain. The b-c1 complex mediates electron transfer from ubiquinol to cytochrome c. Contributes to the generation of a proton gradient across the mitochondrial membrane that is then used for ATP synthesis. This Synbranchus marmoratus (Marbled swamp eel) protein is Cytochrome b (mt-cyb).